A 251-amino-acid chain; its full sequence is 3-deoxy-manno-octulosonate cytidylyltransferase (251 aa).

This sequence belongs to the KdsB family.

The protein localises to the cytoplasm. It catalyses the reaction 3-deoxy-alpha-D-manno-oct-2-ulosonate + CTP = CMP-3-deoxy-beta-D-manno-octulosonate + diphosphate. The protein operates within nucleotide-sugar biosynthesis; CMP-3-deoxy-D-manno-octulosonate biosynthesis; CMP-3-deoxy-D-manno-octulosonate from 3-deoxy-D-manno-octulosonate and CTP: step 1/1. It participates in bacterial outer membrane biogenesis; lipopolysaccharide biosynthesis. Functionally, activates KDO (a required 8-carbon sugar) for incorporation into bacterial lipopolysaccharide in Gram-negative bacteria. This is 3-deoxy-manno-octulosonate cytidylyltransferase from Vibrio vulnificus (strain YJ016).